The primary structure comprises 922 residues: Coronin-7 (922 aa).

4 WD repeats span residues 75–115 (CHSD…EALP), 124–163 (PEEL…PLTE), 166–205 (AHKD…QASQ), and 209–253 (AHEN…SALA). Residues 419–467 (DTDLSEGFSSPSSLMSPSTPSSLGPSLSSTSGIGTSPSQRSLQSLLGPS) are disordered. Over residues 427-456 (SSPSSLMSPSTPSSLGPSLSSTSGIGTSPS) the composition is skewed to low complexity. Phosphoserine is present on residues Ser-459 and Ser-462. Residue Lys-469 forms a Glycyl lysine isopeptide (Lys-Gly) (interchain with G-Cter in ubiquitin) linkage. 4 WD repeats span residues 539–581 (QNGT…NVLT), 589–629 (GHTE…ERLK), 632–671 (GHQD…LPLQ), and 725–765 (DVAP…PFFL). A disordered region spans residues 858–922 (GMTPVSQAPR…FEGVDEDEWD (65 aa)). Over residues 881 to 893 (LEEKSDQQKKEEL) the composition is skewed to basic and acidic residues. A Phosphoserine modification is found at Ser-912.

It belongs to the WD repeat coronin family. Interacts with clathrin adapter AP1 complex. This interaction takes place at Golgi membranes and not AP1-positive endosomal membranes. Interacts (when ubiquitinated at Lys-469) with EPS15. In terms of processing, the membrane-associated form is phosphorylated on tyrosine residues. Post-translationally, ubiquitinated via 'Lys-33'-linked ubiquitin chains by the BCR(KLHL20) E3 ubiquitin ligase complex: 'Lys-33'-linked ubiquitination promotes interaction with EPS15 and facilitates actin polymerization at the trans-Golgi network, thereby facilitating post-Golgi trafficking. Deubiquitinated by ZRANB1/TRABID. As to expression, in the adult, widely expressed with highest levels in brain, thymus and kidney and low levels in skeletal and heart muscle. Not expressed in lung. In the eye, strongly expressed in the outer plexiform layer of the retina. In the intestine, expressed both in terminally differentiated epithelial cells and in crypt epithelium. In the embryo, strongest expression is seen in brain, thymus, intestine, apical epidermal layers of the skin and developing lens fibers of the eye.

It is found in the golgi apparatus membrane. It localises to the golgi apparatus. The protein localises to the trans-Golgi network. The protein resides in the cytoplasmic vesicle. Its subcellular location is the cytoplasm. It is found in the cytosol. Functionally, F-actin regulator involved in anterograde Golgi to endosome transport: upon ubiquitination via 'Lys-33'-linked ubiquitin chains by the BCR(KLHL20) E3 ubiquitin ligase complex, interacts with EPS15 and localizes to the trans-Golgi network, where it promotes actin polymerization, thereby facilitating post-Golgi trafficking. May play a role in the maintenance of the Golgi apparatus morphology. The protein is Coronin-7 (Coro7) of Mus musculus (Mouse).